The chain runs to 365 residues: Probable flavin mononucleotide-dependent alkene reductase (365 aa).

Residues 30–32 (PLT), A63, and Q105 each bind FMN. Y191 functions as the Proton donor in the catalytic mechanism. Residues R238, S303, and 324–325 (GT) each bind FMN.

The protein belongs to the NADH:flavin oxidoreductase/NADH oxidase family. Monomer. FMN serves as cofactor.

Its subcellular location is the cytoplasm. It is found in the cytosol. In terms of biological role, may function as a flavin mononucleotide (FMN)-dependent alkene reductase on substrates carrying alpha,beta-unsaturated carbonyl groups (ketones, aldehydes, carboxylic acids, esters, lactones or cyclic imides). The catalysis depends on NAD(P)H, which acts as a hydride donor for the reduction. Seems to be involved in metabolic pathways required for efficient replication of amastigotes within macrophages. Functionally, acts as a FMN-dependent nitroreductase that activates anti-leishmanial bicyclic nitroaromatic prodrugs including delamanid, DNDI-VL-2098 and (R)-PA-824, forming toxic products that kill the parasites. The polypeptide is Probable flavin mononucleotide-dependent alkene reductase (Leishmania infantum).